A 335-amino-acid polypeptide reads, in one-letter code: Proline-rich protein 1 (335 aa).

The signal sequence occupies residues 1–22 (MAITRASFAICILLSLATIATA). Repeat copies occupy residues 30 to 34 (PPVYT), 35 to 39 (SPVNK), 40 to 43 (PTLP), 44 to 48 (PPVYT), 49 to 53 (PPVHK), 54 to 57 (PTLP), 58 to 62 (PPVYT), 63 to 67 (PPVHK), 68 to 71 (PTLS), 72 to 76 (PPVYT), 77 to 81 (KPTLP), 82 to 86 (PPAYT), 87 to 91 (PPVYN), 92 to 96 (KPTLP), 97 to 101 (APVYT), 102 to 106 (PPVYK), 107 to 110 (PTLS), 111 to 115 (PPVYT), 116 to 120 (KPTLL), 121 to 125 (PPVFK), 126 to 130 (PTLSP), 131 to 135 (PVYTK), 136 to 139 (PTLS), 140 to 144 (PTVYK), 145 to 148 (PTLS), 149 to 153 (PPVNN), 154 to 158 (KPSLS), 159 to 163 (PPVYK), 164 to 167 (PTLS), 168 to 172 (PPVYT), 173 to 177 (KPTLP), 178 to 182 (PPVYK), 184 to 189 (SPSYSP), 190 to 194 (PPPFA), 195 to 200 (PKPTYT), 201 to 207 (PPTKPYV), 208 to 212 (PEIIK), 284 to 288 (SPVET), and 319 to 323 (PFYFT). A 39 X 5 AA approximate repeats region spans residues 30-323 (PPVYTSPVNK…LFNVGPFYFT (294 aa)).

It belongs to the plant proline-rich protein superfamily. ENOD12 family. Exclusively expressed in roots, especially in root hairs.

It localises to the secreted. Its subcellular location is the cell wall. May contribute to cell wall structure in root hairs. This chain is Proline-rich protein 1 (PRP1), found in Arabidopsis thaliana (Mouse-ear cress).